A 574-amino-acid chain; its full sequence is MKPVFSVDQIRRAENTLFELQADPDELMISAASAVADVALAMVDGPAPAVSSEESILLLVGPGGNGGDALYAGAFLAEEGHHVDALLLGNGKVHQSALAYYESLGGQIISDFPPHYLYRLVIDGLFGIGGRGGLTPELASLVESFSASGIPILAIDVPSGVHADSGELPPGVMVTVEGFDNDAPMARQKIPAHIDADVTITFGGLRRAHAVSPACGEVLCADINIAGGGGKSLSAELSQVQAEDATPQMFASKAYQRKDSLFERANLKATAPHIHRIGQHFTVLNMEPGPDHDKYSGGIVGIVAGSGTYPGAAVLSVKAAVRATSAMVRYVGPALNFVIQSLPEVVATQSLATAGRVQAWVHGPGRGLEAEQSAELAELLSRPEPVLIDADSLSLLQLSAELRQALRERKAPTVLTPHKGEFERIAAELRSEGVEIPQADKDPIGAAQALAKEFDCCVLLKGKYTVIAAHDFVHAINAGHSWLATPGSGDVLSGLVGAHLAQSYAELNRLPEFFPDVTLSDSAIYTQIAPAATIHAVAAGLAARTEFGFAPTSASLIADAIPAATAKVDLKRIV.

The tract at residues methionine 1–alanine 269 is NAD(P)H-hydrate epimerase. Positions isoleucine 10–lysine 231 constitute a YjeF N-terminal domain. The segment at glycine 64–aspartate 68 is NADPHX 1; for epimerase activity. Asparagine 65 and aspartate 123 together coordinate K(+). The segment at glycine 127 to glycine 133 is NADPHX 1; for epimerase activity. Residue aspartate 156 coordinates (6S)-NADPHX. Serine 159 is a binding site for K(+). In terms of domain architecture, YjeF C-terminal spans isoleucine 277–valine 568. Residues isoleucine 277–valine 574 are ADP-dependent (S)-NAD(P)H-hydrate dehydratase. Glycine 365 contributes to the (6S)-NADPHX binding site. The interval histidine 418–arginine 424 is NADPHX 2; for dehydratase activity. ADP contacts are provided by residues lysine 461 to threonine 465 and histidine 480 to glycine 489. Residue aspartate 490 coordinates (6S)-NADPHX.

This sequence in the N-terminal section; belongs to the NnrE/AIBP family. In the C-terminal section; belongs to the NnrD/CARKD family. It depends on K(+) as a cofactor.

It carries out the reaction (6S)-NADHX + ADP = AMP + phosphate + NADH + H(+). The catalysed reaction is (6S)-NADPHX + ADP = AMP + phosphate + NADPH + H(+). It catalyses the reaction (6R)-NADHX = (6S)-NADHX. The enzyme catalyses (6R)-NADPHX = (6S)-NADPHX. Its function is as follows. Bifunctional enzyme that catalyzes the epimerization of the S- and R-forms of NAD(P)HX and the dehydration of the S-form of NAD(P)HX at the expense of ADP, which is converted to AMP. This allows the repair of both epimers of NAD(P)HX, a damaged form of NAD(P)H that is a result of enzymatic or heat-dependent hydration. The protein is Bifunctional NAD(P)H-hydrate repair enzyme Nnr (nnr) of Corynebacterium glutamicum (strain ATCC 13032 / DSM 20300 / JCM 1318 / BCRC 11384 / CCUG 27702 / LMG 3730 / NBRC 12168 / NCIMB 10025 / NRRL B-2784 / 534).